The following is a 312-amino-acid chain: Methionyl-tRNA formyltransferase (312 aa).

109 to 112 serves as a coordination point for (6S)-5,6,7,8-tetrahydrofolate; sequence SLLP.

The protein belongs to the Fmt family.

The catalysed reaction is L-methionyl-tRNA(fMet) + (6R)-10-formyltetrahydrofolate = N-formyl-L-methionyl-tRNA(fMet) + (6S)-5,6,7,8-tetrahydrofolate + H(+). Its function is as follows. Attaches a formyl group to the free amino group of methionyl-tRNA(fMet). The formyl group appears to play a dual role in the initiator identity of N-formylmethionyl-tRNA by promoting its recognition by IF2 and preventing the misappropriation of this tRNA by the elongation apparatus. The polypeptide is Methionyl-tRNA formyltransferase (Anaeromyxobacter dehalogenans (strain 2CP-1 / ATCC BAA-258)).